The sequence spans 853 residues: Envelope glycoprotein gp160 (853 aa).

Positions 1–32 (MRVKEKYQHLWRWGWKWGIMLLGILMICSATE) are cleaved as a signal peptide. The Extracellular portion of the chain corresponds to 33-682 (NLWVTVYYGV…ITNWLWYIKI (650 aa)). Residues cysteine 54 and cysteine 74 are joined by a disulfide bond. 16 N-linked (GlcNAc...) asparagine; by host glycosylation sites follow: asparagine 88, asparagine 136, asparagine 141, asparagine 156, asparagine 160, asparagine 186, asparagine 195, asparagine 232, asparagine 239, asparagine 260, asparagine 274, asparagine 287, asparagine 293, asparagine 299, asparagine 330, and asparagine 354. Disulfide bonds link cysteine 119-cysteine 203, cysteine 126-cysteine 194, cysteine 131-cysteine 157, cysteine 216-cysteine 245, and cysteine 226-cysteine 237. The interval 131–156 (CTDLKNDTNTNSSNGRMIMEKGEIKN) is V1. The V2 stretch occupies residues 157–194 (CSFNISTSIRNKVQKEYAFFYKLDIRPIDNTTYRLISC). Residues 294–328 (CTRPNNNTRKSIRIQRGPGRAFVTIGKIGNMRQAH) form a V3 region. Cysteine 294 and cysteine 329 are disulfide-bonded. Positions 362–372 (SSGGDPEIVTH) are CD4-binding loop. 2 disulfide bridges follow: cysteine 376-cysteine 443 and cysteine 383-cysteine 416. The tract at residues 383-416 (CNSTQLFNSTWFNSTWSTEGSNNTEGSDTITLPC) is V4. N-linked (GlcNAc...) asparagine; by host glycans are attached at residues asparagine 384, asparagine 390, asparagine 395, asparagine 404, asparagine 446, and asparagine 461. 2 V5 regions span residues 459-469 (NTNESEVFRPG) and 461-469 (NESEVFRPG). Positions 510-530 (AVGIGALFLGFLGAAGSTMGA) are fusion peptide. An immunosuppression region spans residues 572 to 590 (KQLQARILAVERYLKDQQL). A disulfide bridge links cysteine 596 with cysteine 602. Residues asparagine 609, asparagine 614, asparagine 623, asparagine 635, and asparagine 672 are each glycosylated (N-linked (GlcNAc...) asparagine; by host). Residues 631-665 (REINNYTSLIHSLIDESQNQQEKNEQELLELDKWA) are a coiled coil. The MPER; binding to GalCer stretch occupies residues 660-681 (ELDKWASLWNWFNITNWLWYIK). A helical transmembrane segment spans residues 683-703 (FIMIVGGLVGLRIVFAVLSIV). The Cytoplasmic segment spans residues 704–853 (NRVRQGYSPL…RIRQGLERIL (150 aa)). The YXXL motif; contains endocytosis signal signature appears at 710–713 (YSPL). The tract at residues 717 to 741 (THLPNRGGPDRPEGIEEEGGERDRD) is disordered. Cysteine 762 carries S-palmitoyl cysteine; by host lipidation.

The protein belongs to the HIV-1 env protein family. In terms of assembly, the mature envelope protein (Env) consists of a homotrimer of non-covalently associated gp120-gp41 heterodimers. The resulting complex protrudes from the virus surface as a spike. There seems to be as few as 10 spikes on the average virion. Interacts with host CD4, CCR5 and CXCR4. Gp120 also interacts with the C-type lectins CD209/DC-SIGN and CLEC4M/DC-SIGNR (collectively referred to as DC-SIGN(R)). Gp120 and gp41 interact with GalCer. Gp120 interacts with host ITGA4/ITGB7 complex; on CD4+ T-cells, this interaction results in rapid activation of integrin ITGAL/LFA-1, which facilitates efficient cell-to-cell spreading of HIV-1. Gp120 interacts with cell-associated heparan sulfate; this interaction increases virus infectivity on permissive cells and may be involved in infection of CD4- cells. The mature envelope protein (Env) consists of a homotrimer of non-covalently associated gp120-gp41 heterodimers. The resulting complex protrudes from the virus surface as a spike. There seems to be as few as 10 spikes on the average virion. Post-translationally, highly glycosylated by host. The high number of glycan on the protein is reffered to as 'glycan shield' because it contributes to hide protein sequence from adaptive immune system. In terms of processing, palmitoylation of the transmembrane protein and of Env polyprotein (prior to its proteolytic cleavage) is essential for their association with host cell membrane lipid rafts. Palmitoylation is therefore required for envelope trafficking to classical lipid rafts, but not for viral replication. Specific enzymatic cleavages in vivo yield mature proteins. Envelope glycoproteins are synthesized as an inactive precursor that is heavily N-glycosylated and processed likely by host cell furin in the Golgi to yield the mature SU and TM proteins. The cleavage site between SU and TM requires the minimal sequence [KR]-X-[KR]-R. About 2 of the 9 disulfide bonds of gp41 are reduced by P4HB/PDI, following binding to CD4 receptor.

Its subcellular location is the virion membrane. It localises to the host cell membrane. The protein localises to the host endosome membrane. Oligomerizes in the host endoplasmic reticulum into predominantly trimers. In a second time, gp160 transits in the host Golgi, where glycosylation is completed. The precursor is then proteolytically cleaved in the trans-Golgi and thereby activated by cellular furin or furin-like proteases to produce gp120 and gp41. Its function is as follows. Attaches the virus to the host lymphoid cell by binding to the primary receptor CD4. This interaction induces a structural rearrangement creating a high affinity binding site for a chemokine coreceptor like CXCR4 and/or CCR5. Acts as a ligand for CD209/DC-SIGN and CLEC4M/DC-SIGNR, which are respectively found on dendritic cells (DCs), and on endothelial cells of liver sinusoids and lymph node sinuses. These interactions allow capture of viral particles at mucosal surfaces by these cells and subsequent transmission to permissive cells. HIV subverts the migration properties of dendritic cells to gain access to CD4+ T-cells in lymph nodes. Virus transmission to permissive T-cells occurs either in trans (without DCs infection, through viral capture and transmission), or in cis (following DCs productive infection, through the usual CD4-gp120 interaction), thereby inducing a robust infection. In trans infection, bound virions remain infectious over days and it is proposed that they are not degraded, but protected in non-lysosomal acidic organelles within the DCs close to the cell membrane thus contributing to the viral infectious potential during DCs' migration from the periphery to the lymphoid tissues. On arrival at lymphoid tissues, intact virions recycle back to DCs' cell surface allowing virus transmission to CD4+ T-cells. Functionally, acts as a class I viral fusion protein. Under the current model, the protein has at least 3 conformational states: pre-fusion native state, pre-hairpin intermediate state, and post-fusion hairpin state. During fusion of viral and target intracellular membranes, the coiled coil regions (heptad repeats) assume a trimer-of-hairpins structure, positioning the fusion peptide in close proximity to the C-terminal region of the ectodomain. The formation of this structure appears to drive apposition and subsequent fusion of viral and target cell membranes. Complete fusion occurs in host cell endosomes and is dynamin-dependent, however some lipid transfer might occur at the plasma membrane. The virus undergoes clathrin-dependent internalization long before endosomal fusion, thus minimizing the surface exposure of conserved viral epitopes during fusion and reducing the efficacy of inhibitors targeting these epitopes. Membranes fusion leads to delivery of the nucleocapsid into the cytoplasm. This chain is Envelope glycoprotein gp160, found in Human immunodeficiency virus type 1 group M subtype B (isolate MFA) (HIV-1).